A 490-amino-acid chain; its full sequence is Aspartyl/glutamyl-tRNA(Asn/Gln) amidotransferase subunit B (490 aa).

The protein belongs to the GatB/GatE family. GatB subfamily. In terms of assembly, heterotrimer of A, B and C subunits.

It catalyses the reaction L-glutamyl-tRNA(Gln) + L-glutamine + ATP + H2O = L-glutaminyl-tRNA(Gln) + L-glutamate + ADP + phosphate + H(+). The enzyme catalyses L-aspartyl-tRNA(Asn) + L-glutamine + ATP + H2O = L-asparaginyl-tRNA(Asn) + L-glutamate + ADP + phosphate + 2 H(+). In terms of biological role, allows the formation of correctly charged Asn-tRNA(Asn) or Gln-tRNA(Gln) through the transamidation of misacylated Asp-tRNA(Asn) or Glu-tRNA(Gln) in organisms which lack either or both of asparaginyl-tRNA or glutaminyl-tRNA synthetases. The reaction takes place in the presence of glutamine and ATP through an activated phospho-Asp-tRNA(Asn) or phospho-Glu-tRNA(Gln). This is Aspartyl/glutamyl-tRNA(Asn/Gln) amidotransferase subunit B from Methylobacterium nodulans (strain LMG 21967 / CNCM I-2342 / ORS 2060).